Here is a 440-residue protein sequence, read N- to C-terminus: 3-phosphoshikimate 1-carboxyvinyltransferase (440 aa).

Residues lysine 25, serine 26, and arginine 30 each coordinate 3-phosphoshikimate. Lysine 25 is a binding site for phosphoenolpyruvate. Phosphoenolpyruvate is bound by residues glycine 96 and arginine 124. 4 residues coordinate 3-phosphoshikimate: serine 168, glutamine 169, aspartate 310, and lysine 337. A phosphoenolpyruvate-binding site is contributed by glutamine 169. Aspartate 310 serves as the catalytic Proton acceptor. Residues arginine 341, arginine 382, and lysine 409 each contribute to the phosphoenolpyruvate site.

The protein belongs to the EPSP synthase family. Monomer.

The protein localises to the cytoplasm. The catalysed reaction is 3-phosphoshikimate + phosphoenolpyruvate = 5-O-(1-carboxyvinyl)-3-phosphoshikimate + phosphate. Its pathway is metabolic intermediate biosynthesis; chorismate biosynthesis; chorismate from D-erythrose 4-phosphate and phosphoenolpyruvate: step 6/7. Functionally, catalyzes the transfer of the enolpyruvyl moiety of phosphoenolpyruvate (PEP) to the 5-hydroxyl of shikimate-3-phosphate (S3P) to produce enolpyruvyl shikimate-3-phosphate and inorganic phosphate. The sequence is that of 3-phosphoshikimate 1-carboxyvinyltransferase from Chlamydia trachomatis serovar D (strain ATCC VR-885 / DSM 19411 / UW-3/Cx).